The chain runs to 228 residues: Latherin (228 aa).

The N-terminal stretch at 1-20 (MLKVSCLFVLLCGLLVPSSA) is a signal peptide. A disulfide bridge connects residues Cys153 and Cys196.

This sequence belongs to the BPI/LBP/Plunc superfamily. Plunc family. Monomer. Post-translationally, no sign of N-X-[ST] acceptor site even though reported as N-glycosylated. In terms of tissue distribution, found in sweat (at protein level).

It localises to the secreted. In terms of biological role, major protein in sweat, has surfactant properties. Has a role in temperature regulation by having a capacity to make hydrophobic surfaces wettable and so can function in promoting spreading and evaporation of sweat. The chain is Latherin (LATH) from Equus caballus (Horse).